The sequence spans 312 residues: Malate dehydrogenase (312 aa).

NAD(+) is bound by residues 12 to 17 and Asp-36; that span reads GAGFTG. Positions 87 and 93 each coordinate substrate. NAD(+)-binding positions include Asn-100 and 123–125; that span reads LTN. Asn-125 provides a ligand contact to substrate. At Ser-149 the chain carries Phosphoserine. Residue Arg-156 participates in substrate binding. Catalysis depends on His-180, which acts as the Proton acceptor.

This sequence belongs to the LDH/MDH superfamily. MDH type 3 family.

The enzyme catalyses (S)-malate + NAD(+) = oxaloacetate + NADH + H(+). Catalyzes the reversible oxidation of malate to oxaloacetate. This chain is Malate dehydrogenase, found in Bacillus cereus (strain ZK / E33L).